A 73-amino-acid chain; its full sequence is IGMVVECKDGYLVGNDGCKYSCFTRPGTYCANECSRVKGKDGYCYAWMACYCYSMPNWVKTWDRATNRCGRGK.

The signal sequence occupies residues 1 to 7; the sequence is IGMVVEC. An LCN-type CS-alpha/beta domain is found at 8–70; that stretch reads KDGYLVGNDG…TWDRATNRCG (63 aa). Cystine bridges form between Cys18/Cys69, Cys22/Cys44, Cys30/Cys50, and Cys34/Cys52. Arg71 carries the post-translational modification Arginine amide.

It belongs to the long (4 C-C) scorpion toxin superfamily. Sodium channel inhibitor family. Beta subfamily. As to expression, expressed by the venom gland.

The protein localises to the secreted. In terms of biological role, beta toxins bind voltage-independently at site-4 of sodium channels (Nav) and shift the voltage of activation toward more negative potentials thereby affecting sodium channel activation and promoting spontaneous and repetitive firing. The protein is Toxin Td4 of Tityus discrepans (Venezuelan scorpion).